Reading from the N-terminus, the 450-residue chain is ATP-dependent protease ATPase subunit HslU (450 aa).

Residues Val29, 71 to 76, Asp261, Glu328, and Arg400 contribute to the ATP site; that span reads GVGKTE.

The protein belongs to the ClpX chaperone family. HslU subfamily. As to quaternary structure, a double ring-shaped homohexamer of HslV is capped on each side by a ring-shaped HslU homohexamer. The assembly of the HslU/HslV complex is dependent on binding of ATP.

The protein localises to the cytoplasm. Its function is as follows. ATPase subunit of a proteasome-like degradation complex; this subunit has chaperone activity. The binding of ATP and its subsequent hydrolysis by HslU are essential for unfolding of protein substrates subsequently hydrolyzed by HslV. HslU recognizes the N-terminal part of its protein substrates and unfolds these before they are guided to HslV for hydrolysis. This chain is ATP-dependent protease ATPase subunit HslU, found in Rickettsia prowazekii (strain Madrid E).